Here is a 55-residue protein sequence, read N- to C-terminus: Spermatid nuclear transition protein 1 (55 aa).

Positions 1 to 42 (MSTSRKLKSQGTRRGKNRTPHKGVKRGCSKRKYRKSSLKSRK) are enriched in basic residues. The tract at residues 1–55 (MSTSRKLKSQGTRRGKNRTPHKGVKRGCSKRKYRKSSLKSRKRCDDANRNFRSHL) is disordered. Ser9, Ser36, Ser37, and Ser40 each carry phosphoserine.

The protein belongs to the nuclear transition protein 1 family. Testis.

It localises to the nucleus. The protein localises to the chromosome. Its function is as follows. Plays a key role in the replacement of histones to protamine in the elongating spermatids of mammals. In condensing spermatids, loaded onto the nucleosomes, where it promotes the recruitment and processing of protamines, which are responsible for histone eviction. The chain is Spermatid nuclear transition protein 1 (TNP1) from Ovis aries (Sheep).